Here is an 87-residue protein sequence, read N- to C-terminus: Class II metallothionein-like protein 1A (87 aa).

Belongs to the metallothionein superfamily. Type 15 family. In terms of tissue distribution, expressed in developing seeds.

Functionally, metallothioneins have a high content of cysteine residues that bind various heavy metals. The polypeptide is Class II metallothionein-like protein 1A (MT21A) (Oryza sativa subsp. japonica (Rice)).